Here is a 346-residue protein sequence, read N- to C-terminus: fMet-Leu-Phe receptor (346 aa).

Residues N1 and N7 are each glycosylated (N-linked (GlcNAc...) asparagine). Residues 1 to 24 lie on the Extracellular side of the membrane; the sequence is NSSLPTNISGGTPAVSAGYLFLDI. A helical membrane pass occupies residues 25-47; sequence VTYLVFAVTFVLGVLGNGLVIWV. Residues 48–58 lie on the Cytoplasmic side of the membrane; that stretch reads AGFRMTHTVTT. The chain crosses the membrane as a helical span at residues 59-80; that stretch reads ISYLNLAVADFCFTSTLPFFMV. Topologically, residues 81-97 are extracellular; the sequence is KKAMGGHWPFGWFLCKF. A disulfide bridge connects residues C95 and C173. A helical transmembrane segment spans residues 98 to 118; the sequence is IFTIVDINLFGSVFLIALIAL. Residues 119-137 lie on the Cytoplasmic side of the membrane; it reads DRCVCVLHPVWTQNHRTVS. A helical transmembrane segment spans residues 138–159; that stretch reads LAKKVIIGPWVMALLLTLPVII. Over 160-202 the chain is Extracellular; it reads RVTTVPGKMGTVACTFNFSPWTNDPKERIKVAVAMLTVRGIIR. A helical transmembrane segment spans residues 203-223; the sequence is FIIGFSAPMSIVAVSYGLIAT. The Cytoplasmic portion of the chain corresponds to 224-239; the sequence is KIDKQGLIKSSRTLRV. Residues 240–263 form a helical membrane-spanning segment; sequence LSFVAAAFFLSWSPYQVVALIATV. Residues 264-282 lie on the Extracellular side of the membrane; it reads RIRELLQGMYKEIGIAVDV. The chain crosses the membrane as a helical span at residues 283 to 302; the sequence is TSALAFFNSCLNPMLYVFMG. The Cytoplasmic portion of the chain corresponds to 303-346; the sequence is QDFRERLIHALPASLERALTEDSTQTSDTATNSTLPSAEVALQA. Positions 322-346 are disordered; it reads TEDSTQTSDTATNSTLPSAEVALQA. The span at 323–338 shows a compositional bias: polar residues; that stretch reads EDSTQTSDTATNSTLP.

Belongs to the G-protein coupled receptor 1 family. Phosphorylated; which is necessary for desensitization.

It localises to the cell membrane. Its function is as follows. High affinity receptor for N-formyl-methionyl peptides (fMLP), which are powerful neutrophil chemotactic factors. Binding of fMLP to the receptor stimulates intracellular calcium mobilization and superoxide anion release. This response is mediated via a G-protein that activates a phosphatidylinositol-calcium second messenger system. Receptor for TAFA4, mediates its effects on chemoattracting macrophages, promoting phagocytosis and increasing ROS release. Receptor for cathepsin CTSG, leading to increased phagocyte chemotaxis. This is fMet-Leu-Phe receptor (FPR1) from Gorilla gorilla gorilla (Western lowland gorilla).